Here is a 154-residue protein sequence, read N- to C-terminus: Superoxide dismutase [Cu-Zn] (154 aa).

Residues His45, His47, and His62 each coordinate Cu cation. A disulfide bond links Cys56 and Cys146. Residues His62, His70, His79, and Asp82 each contribute to the Zn(2+) site. His120 serves as a coordination point for Cu cation.

Belongs to the Cu-Zn superoxide dismutase family. Homodimer. The cofactor is Cu cation. Zn(2+) is required as a cofactor.

The protein localises to the cytoplasm. The catalysed reaction is 2 superoxide + 2 H(+) = H2O2 + O2. Destroys radicals which are normally produced within the cells and which are toxic to biological systems. The chain is Superoxide dismutase [Cu-Zn] from Bombyx mori (Silk moth).